We begin with the raw amino-acid sequence, 414 residues long: Serine hydroxymethyltransferase (414 aa).

Residues Leu121 and 125-127 (GHL) each bind (6S)-5,6,7,8-tetrahydrofolate. Lys229 carries the post-translational modification N6-(pyridoxal phosphate)lysine.

Belongs to the SHMT family. Homodimer. Pyridoxal 5'-phosphate is required as a cofactor.

It is found in the cytoplasm. It catalyses the reaction (6R)-5,10-methylene-5,6,7,8-tetrahydrofolate + glycine + H2O = (6S)-5,6,7,8-tetrahydrofolate + L-serine. The protein operates within one-carbon metabolism; tetrahydrofolate interconversion. Its pathway is amino-acid biosynthesis; glycine biosynthesis; glycine from L-serine: step 1/1. Catalyzes the reversible interconversion of serine and glycine with tetrahydrofolate (THF) serving as the one-carbon carrier. This reaction serves as the major source of one-carbon groups required for the biosynthesis of purines, thymidylate, methionine, and other important biomolecules. Also exhibits THF-independent aldolase activity toward beta-hydroxyamino acids, producing glycine and aldehydes, via a retro-aldol mechanism. This Acidovorax ebreus (strain TPSY) (Diaphorobacter sp. (strain TPSY)) protein is Serine hydroxymethyltransferase.